The primary structure comprises 257 residues: Large ribosomal subunit protein uL3 (257 aa).

Residue Gln151 is modified to N5-methylglutamine. The interval 218–257 (YPASIKSAANTNTAPADAPVETPAEEAVVDTAATDGAQES) is disordered. Residues 225-236 (AANTNTAPADAP) are compositionally biased toward low complexity.

Belongs to the universal ribosomal protein uL3 family. Part of the 50S ribosomal subunit. Forms a cluster with proteins L14 and L19. Methylated by PrmB.

Its function is as follows. One of the primary rRNA binding proteins, it binds directly near the 3'-end of the 23S rRNA, where it nucleates assembly of the 50S subunit. The polypeptide is Large ribosomal subunit protein uL3 (Sphingopyxis alaskensis (strain DSM 13593 / LMG 18877 / RB2256) (Sphingomonas alaskensis)).